Here is a 185-residue protein sequence, read N- to C-terminus: MTMIPDTELVLVVAADENNVIGLDGGVPWHYPEDVRQYKNRIAGHPIILGRRTFESMKPIPDCYTVVLTSDDRRSADSETVEYATTPQIAVEAAARAGASGAFAGDSAGADSSPPVTYVIGGEAVYDLFLPFAGRVFLSRIHEHNEGDRYFPDLGAEWTELSREPHDGFDVIEYEQASPRPLDDL.

In terms of domain architecture, DHFR spans 8-185; that stretch reads ELVLVVAADE…QASPRPLDDL (178 aa).

Belongs to the dihydrofolate reductase family.

The enzyme catalyses (6S)-5,6,7,8-tetrahydrofolate + NADP(+) = 7,8-dihydrofolate + NADPH + H(+). It participates in cofactor biosynthesis; tetrahydrofolate biosynthesis; 5,6,7,8-tetrahydrofolate from 7,8-dihydrofolate: step 1/1. Its function is as follows. Key enzyme in folate metabolism. Catalyzes an essential reaction for de novo glycine and purine synthesis, and for DNA precursor synthesis. The sequence is that of Dihydrofolate reductase 1 (folA1) from Haloarcula marismortui (strain ATCC 43049 / DSM 3752 / JCM 8966 / VKM B-1809) (Halobacterium marismortui).